The chain runs to 89 residues: Large ribosomal subunit protein bL27 (89 aa).

It belongs to the bacterial ribosomal protein bL27 family.

The sequence is that of Large ribosomal subunit protein bL27 from Bacteroides thetaiotaomicron (strain ATCC 29148 / DSM 2079 / JCM 5827 / CCUG 10774 / NCTC 10582 / VPI-5482 / E50).